The sequence spans 3015 residues: MSTLPKPQRKTKRNTNRRPMDVKFPGGGQIVGGVYLLPRRGPRLGVRATRKTSERSQPRGRRQPIPKARQPIGRSWGQPGYPWPLYGNEGCGWAGWLLSPRGSRPNWGPNDPRRRSRNLGKVIDTLTCGLADLMGYIPVLGGPLGGVAAALAHGVRAIEDGVNYATGNLPGCSFSIFLLALLSCLTTPASAIQVRNASGIYHLTNDCSNNSIVFEAETIILHLPGCVPCIKVGNGSRCWLSVSPTLAVPNSSVPIHGFRRHVDLLVGAAAFCSAMYIGDLCGSVFLVGQLFTFRPKHHQVTQDCNCSIYAGHITGHRMAWDMMLNWSPTVSYVVSSALRVPQLLLEVITGAHWGVLGALLYFSMVANWAKVIAVLFLFAGADATTYTGSAVSSTTGAFVSLFSPGPTQNLQLVNSNGSWHINRTALNCNDSLQTGFIAGLFARYKFNSTGCPERMSKCRPLHSFEQGWGPISYVNISGSSEDKPYCWHYAPRPCGIVPARNVCGPVYCFTPSPVVVGTTDQRGIPTYTWGENVSDVFLLHSARPPLGAWFGCTWMNSSGFVKTCGAPPCRIKPTINETDLVCPTDCFRKHPDASFVKCGSGPWLTPRCMVDYPYRLWHYPCTVNFTIHKVRVFVGGVEHRFNAACNWTRGDRCELDDRDRFEMSPLLFSTTQLAILPCSFTTMPALSTGLIHLHQNIVDIQYLYGVSTAVVSWAMKWEYVVLAFLVLADARVCACLWLMFLVGQAEAALENVIVLNAASAASCQGLLWGLIFICCAWHVRGRAVPVTTYALLQLWPLLLLILALPRRAYAFDSEQAASAGLLVLGLITIFTLTPAYKQLLISMLWWIQYFIALTEAQLHQWVPSLLVRGGRDAVILLACLFHPQLGFEVTKILLALLGPLYLLQYSLLKTPYFVRAHILLRACMFFRGMARGRYAQAILLRIGAWTGTYIYDHLAPLSDWACDGLRDLAVAVEPVVFSPMEKKVITWGADTAACGDIIAGLPVAARRGNLLFLGPADDVKGKGWRLLAPITAYAQQTRGIVGTIVTSLTGRDKNEVEGEIQVVSTATQSFLATAVNGVLWTVYYGAGSKTLAGPKGPVCQMYTNVDQDLVGWPAPAGARSLTPCSCGSSDLYLVTRNADVIPARRRGDNRAALLSPRPISTLKGSSGGPMLCPSGHVAGIFRAAVCTRGVAKSLDFAPVESMQSSQRSPSFSDNTSPPAVPQTYQVGYLHAPTGSGKSTKVPAAYAAQGYKVLVLNPSVAATLGFGSYMSTSHGIDPNIRTGVRTITTGGAITYSTYGKFLADGGCSGGAYDVIICDECHSTDPTTVSGIGTVLDQAETSGVRLTVLATATPPGSVTVPHPNITESALPTTGEIPFYGKAVPLEYIKGGRHLIFCHPKKKCDELAKQLVSLGLNAVAFYRGVDVSVIPTSGDVVVCATDALMTGYTGDFDSVIDCNVTVTQVVDFSLDPTFTIETTTVPQDAVSRSQRRGRTGRGKHGVYRYVSQGERPSGMFDSVILCEAYDTGCAWYELTPAETTVRLRAYLNTPGLPVCQDHLEFWEGVFTGLTHIDAHFLSQTKQAEENFAYLVAYQATVCARAKAPPPSWDTMWKCLIRLKPMLTGPTPLLYRLGPVQNEVVTTHPITKYIMTCMSADLEVITSTWVLVGGVVAALAAYCLSVGCVVICGRISTSGKPVLIPDREVLYQQFDEMEECSRHIPYLAEGHLIAEQFKQKVLGLIQSTSKQAEELKPAVHAAWPKLEQFWQKQLWNFVSGIQYLAGLSTLPGNPAIASLMSFSASLTSPLSTHQTLLLNILGGWVASQLANPTASTAFVVSGLAGAAVGSIGLGRVIVDVLAGYGAGVSGALVAFKIMCGETPSAEDMVNLLPALLSPGALVVGVVCAAILRRHAGPSEGATQWMNRLIAFASRGNHVSPTHYVPETDTSRQIMTILSSLTVTSLLRKLHEWINTDWSTPCSSSWLRDIWDWVCEVLSDFKTWLKAKLVPALPGVPFLSCQRGFRGTWRGDGICHTTCPCGSEITGHVKNGTMKISGPRWCSNVSHRTFPINATTTGPSVPIPEPNYTRALWRVSAEEYVEVKRVGDSHFVVGATTDNLKCPCQVPAPEFFTEVDGVRLHRYAPRCKPLLRDEVSFSVGLSSYAVGSQLPCEPEPDVTVVTSMLIDPSHVTAEAAARRLARGSPPSLASSSASQLSAPSLKATCTMHGAHPDAELIEANLLWRQEMGGNITRVESENKVVILDSFDPLVPEFEEREMSVPAECHRPRRPKFPPALPIWATPGYNPPVLETWKSPTYEPPVVHGCALPPSGPPPIPPPRRKKVVQLDSSNVSAALAQLAAKTFETPSSPTTGYGSDQPDHSTESSEHDRDDGVASEAESYSSMPPLEGEPGDPDLSSGSWSTVSEEGDSVVCCSYSYSWTGALVTPCAAEEEKLPINPLSNSLIRHHNLVYSTSSRSAATRQKKVTFDRVQLLDQHYYDTVKEIKLRASHVKAQLLSTEEACDLTPPHSARSKFGYGAKDVRSHASKAINHINSVWADLLEDTQTPIPTTIMAKNEVFCVDASKGGRKSARLIVYPDLGVRVCEKRALFDVTRKLPTAIMGDAYGFQYSPQQRVDRLLKMWRSKKTPMGFSYDTRCFDSTVTERDIRTEQDIYLSCQLDPEARKVIESLTERLYVGGPMYNSKGQLCGQRRCRASGVLPTSMGNTVTCFLKATAACRAAGFTDYDMLVCGDDLVVVTESAGVNEDIANLRAFTEAMTRYSATPGDEPSPTYDLELITSCSSNVSVAHDGDGRRYYYLTRDPVTPLARAAWETARHTPVNSWLGNIIMYAPTIWVRMVLMTHFFQILQAQETLDRALDFDIYGVTYSITPLDLPVIIQRLHGMAAFSLHGYSPDELNRVASCLRKLGAPPLRAWRHRARAVRAKLIAQGGKAAVCGKYLFNWAIKTKLRLTPLRGASALDLSGWFTSGYGGGDVYHSASRARPRFLLLCLLLLSVGVGIFLLPAR.

Ser-2 carries the N-acetylserine; by host modification. The interval Ser-2–Lys-23 is interaction with STAT1. Residues Ser-2 to Pro-58 form an interaction with EIF2AK2/PKR region. Positions Ser-2–Arg-59 are interaction with DDX3X. Positions Ser-2 to Ser-75 are disordered. The Cytoplasmic segment spans residues Ser-2–Asn-168. 2 consecutive short sequence motifs (nuclear localization signal) follow at residues Pro-5 to Arg-13 and Pro-38 to Arg-43. Basic residues predominate over residues Pro-7–Asn-16. Residues Gly-32 to Arg-47 are compositionally biased toward low complexity. Ser-53 carries the post-translational modification Phosphoserine; by host. 2 short sequence motifs (nuclear localization signal) span residues Pro-58 to Pro-64 and Pro-66 to Pro-71. Phosphoserine; by host occurs at positions 99 and 116. The interval Pro-112–Ala-152 is important for endoplasmic reticulum and mitochondrial localization. The segment at Val-122–Ser-173 is interaction with APOA2. The segment at Tyr-164–Gly-167 is important for lipid droplets localization. A helical membrane pass occupies residues Leu-169–Ala-189. The propeptide at Leu-178–Ala-191 is ER anchor for the core protein, removed in mature form by host signal peptidase. Residues Ser-190 to Ala-358 are Lumenal-facing. Asn-196, Asn-209, Asn-234, and Asn-250 each carry an N-linked (GlcNAc...) asparagine; by host glycan. Positions Leu-265 to Lys-296 are important for fusion. An N-linked (GlcNAc...) asparagine; by host glycan is attached at Asn-305. A helical transmembrane segment spans residues Leu-359–Ala-379. Topologically, residues Gly-380–Val-726 are lumenal. The segment at Thr-385 to Gln-411 is HVR1. 3 N-linked (GlcNAc...) (high mannose) asparagine; by host glycosylation sites follow: Asn-416, Asn-422, and Asn-429. 4 disulfides stabilise this stretch: Cys-428/Cys-552, Cys-451/Cys-458, Cys-486/Cys-494, and Cys-503/Cys-508. Asn-447 carries N-linked (GlcNAc...) asparagine; by host glycosylation. Residues Val-474–Gly-478 are HVR2. Residue Asn-475 is glycosylated (N-linked (GlcNAc...) asparagine; by host). Residues Ser-480–Pro-493 form a CD81-binding 1 region. The N-linked (GlcNAc...) asparagine; by host glycan is linked to Asn-532. Positions Pro-544–Gly-551 are CD81-binding 2. N-linked (GlcNAc...) asparagine; by host glycosylation occurs at Asn-556. Cystine bridges form between Cys-564–Cys-569, Cys-582–Cys-586, Cys-598–Cys-621, and Cys-608–Cys-645. Asn-624 and Asn-646 each carry an N-linked (GlcNAc...) (high mannose) asparagine; by host glycan. Cys-653 and Cys-678 form a disulfide bridge. The interval Phe-661–Gln-672 is PKR/eIF2-alpha phosphorylation homology domain (PePHD). A helical transmembrane segment spans residues Leu-727 to Ala-747. Over Ala-748–Ala-758 the chain is Lumenal. A helical transmembrane segment spans residues Ser-759–Val-779. Topologically, residues Arg-780–Ala-783 are cytoplasmic. Residues Val-784–Leu-804 traverse the membrane as a helical segment. Over Pro-805–Glu-814 the chain is Lumenal. A helical transmembrane segment spans residues Gln-815–Ala-835. Over Tyr-836–His-882 the chain is Cytoplasmic. Residues Pro-883–Leu-903 form a helical membrane-spanning segment. The Lumenal portion of the chain corresponds to Gln-904 to Met-929. A Peptidase C18 domain is found at Gln-904 to Leu-1027. Residues Tyr-905 to Arg-1207 form a protease NS2-3 region. Cys-923 carries the S-palmitoyl cysteine; by host lipid modification. A helical membrane pass occupies residues Ala-930–Ile-950. The interaction with host SCPS1 stretch occupies residues Ala-930–Ile-950. At Tyr-951–Thr-1658 the chain is on the cytoplasmic side. Residues His-953, Glu-973, and Cys-994 each act as for protease NS2 activity; shared with dimeric partner in the active site. A Peptidase S29 domain is found at Ala-1028–Pro-1209. Catalysis depends on Asp-1108, which acts as the Charge relay system; for serine protease NS3 activity. Zn(2+)-binding residues include Cys-1124 and Cys-1126. Catalysis depends on Ser-1166, which acts as the Charge relay system; for serine protease NS3 activity. Zn(2+) contacts are provided by Cys-1172 and His-1176. Residues Pro-1218–Thr-1370 form the Helicase ATP-binding domain. Ala-1231–Ser-1238 is an ATP binding site. Mg(2+) contacts are provided by Ser-1238 and Glu-1318. A DECH box motif is present at residues Asp-1317–His-1320. Positions Gln-1487–Val-1499 are RNA-binding. A helical membrane pass occupies residues Ser-1659–Gly-1679. Residues Cys-1680–Gly-1691 form an NS3-binding region. At Cys-1680–Gln-1806 the chain is on the cytoplasmic side. A helical membrane pass occupies residues Thr-1807 to Ser-1827. Residues Thr-1828–Ala-1829 are Lumenal-facing. A helical membrane pass occupies residues Phe-1830–Val-1850. A topological domain (cytoplasmic) is located at residue Asp-1851. Residues Val-1852–Gly-1872 form a helical membrane-spanning segment. The Lumenal segment spans residues Glu-1873–Asn-1882. The chain crosses the membrane as a helical span at residues Leu-1883 to Leu-1903. The Cytoplasmic segment spans residues Arg-1904–Cys-1973. Cys-1973 carries the S-palmitoyl cysteine; by host lipid modification. The stretch at Ser-1974–Ala-2003 is an intramembrane region. The Cytoplasmic segment spans residues Leu-2004–Arg-2994. Residues Cys-2012, Cys-2030, Cys-2032, and Cys-2053 each coordinate Zn(2+). The FKBP8-binding stretch occupies residues Glu-2121–Ala-2209. The interval Glu-2121 to Val-2334 is transcriptional activation. The tract at residues Pro-2136–Pro-2140 is interaction with non-structural protein 4A. The interval Arg-2190–Glu-2442 is interaction with host SKP2. Phosphoserine; by host occurs at positions 2195, 2198, 2202, 2205, 2208, and 2211. An ISDR region spans residues Ser-2211–Lys-2250. Residues Ser-2211–His-2276 are interaction with EIF2AK2/PKR. Residues Lys-2250–Tyr-2308 form an NS4B-binding region. The tract at residues Glu-2301–His-2378 is V3. Disordered regions lie at residues Pro-2319–Asp-2338 and Lys-2352–Thr-2413. Positions Pro-2324–Pro-2327 match the SH3-binding motif. A Nuclear localization signal motif is present at residues Pro-2329–Leu-2337. A Glycyl lysine isopeptide (Lys-Gly) (interchain with G-Cter in ubiquitin) cross-link involves residue Lys-2352. Residues Glu-2355 to Gly-2365 are compositionally biased toward polar residues. The segment covering Gln-2368–Gly-2383 has biased composition (basic and acidic residues). Phosphoserine; by host occurs at positions 2453 and 2466. In terms of domain architecture, RdRp catalytic spans Pro-2638–Asp-2756. Mg(2+) is bound by residues Asp-2644, Asp-2742, and Asp-2743. A helical transmembrane segment spans residues Phe-2995 to Arg-3015.

This sequence belongs to the hepacivirus polyprotein family. In terms of assembly, homooligomer. Interacts with E1 (via C-terminus). Interacts with the non-structural protein 5A. Interacts (via N-terminus) with host STAT1 (via SH2 domain); this interaction results in decreased STAT1 phosphorylation and ubiquitin-mediated proteasome-dependent STAT1 degradation, leading to decreased IFN-stimulated gene transcription. Interacts with host STAT3; this interaction constitutively activates STAT3. Interacts with host LTBR receptor. Interacts with host TNFRSF1A receptor and possibly induces apoptosis. Interacts with host HNRPK. Interacts with host YWHAE. Interacts with host UBE3A/E6AP. Interacts with host DDX3X. Interacts with host APOA2. Interacts with host RXRA protein. Interacts with host SP110 isoform 3/Sp110b; this interaction sequesters the transcriptional corepressor SP110 away from the nucleus. Interacts with host CREB3 nuclear transcription protein; this interaction triggers cell transformation. Interacts with host ACY3. Interacts with host C1QR1. Interacts with host RBM24; this interaction, which enhances the interaction of the mature core protein with 5'-UTR, may inhibit viral translation and favor replication. Interacts with host EIF2AK2/PKR; this interaction induces the autophosphorylation of EIF2AK2. Part of the viral assembly initiation complex composed of NS2, E1, E2, NS3, NS4A, NS5A and the mature core protein. As to quaternary structure, forms a heterodimer with envelope glycoprotein E2. Interacts with mature core protein. Interacts with protease NS2. The heterodimer E1/E2 interacts with host CLDN1; this interaction plays a role in viral entry into host cell. Interacts with host SPSB2 (via C-terminus). Part of the viral assembly initiation complex composed of NS2, E1, E2, NS3, NS4A, NS5A and the mature core protein. Interacts with host NEURL3; this interaction prevents E1 binding to glycoprotein E2. Forms a heterodimer with envelope glycoprotein E1. Interacts with host CD81 and SCARB1 receptors; these interactions play a role in viral entry into host cell. Interacts with host EIF2AK2/PKR; this interaction inhibits EIF2AK2 and probably allows the virus to evade the innate immune response. Interacts with host CD209/DC-SIGN and CLEC4M/DC-SIGNR. Interact with host SPCS1; this interaction is essential for viral particle assembly. Interacts with protease NS2. The heterodimer E1/E2 interacts with host CLDN1; this interaction plays a role in viral entry into host cell. Part of the viral assembly initiation complex composed of NS2, E1, E2, NS3, NS4A, NS5A and the mature core protein. Interacts with host SLC3A2/4F2hc; the interaction may facilitate viral entry into host cell. Interacts with human PLSCR1. In terms of assembly, homohexamer. Homoheptamer. Interacts with protease NS2. As to quaternary structure, homodimer. Interacts with host SPCS1; this interaction is essential for viral particle assembly. Interacts with envelope glycoprotein E1. Interacts with envelope glycoprotein E2. Interacts with viroporin p7. Interacts with serine protease/helicase NS3. Part of the replication complex composed of NS2, NS3, NS4A, NS4B, NS5A and the RNA-directed RNA polymerase embedded in an ER-derived membranous web. Part of the viral assembly initiation complex composed of NS2, E1, E2, NS3, NS4A, NS5A and the mature core protein. Interacts with protease NS2. Interacts with non-structural protein 4A; this interaction stabilizes the folding of NS3 serine protease. NS3-NS4A interaction is essential for NS3 activation and allows membrane anchorage of the latter. NS3/NS4A complex also prevents phosphorylation of host IRF3, thus preventing the establishment of dsRNA induced antiviral state. Interacts with host MAVS; this interaction leads to the cleavage and inhibition of host MAVS. Interacts with host TICAM1; this interaction leads to the cleavage and inhibition of host TICAM1. Interacts with host TANK-binding kinase/TBK1; this interaction results in the inhibition of the association between TBK1 and IRF3, which leads to the inhibition of IRF3 activation. Interacts with host RBM24. Part of the replication complex composed of NS2, NS3, NS4A, NS4B, NS5A and the RNA-directed RNA polymerase embedded in an ER-derived membranous web. Part of the viral assembly initiation complex composed of NS2, E1, E2, NS3, NS4A, NS5A and the mature core protein. In terms of assembly, interacts with NS3 serine protease; this interaction stabilizes the folding of NS3 serine protease. NS3-NS4A interaction is essential for NS3 activation and allows membrane anchorage of the latter. Interacts with non-structural protein 5A (via N-terminus). Part of the replication complex composed of NS2, NS3, NS4A, NS4B, NS5A and the RNA-directed RNA polymerase embedded in an ER-derived membranous web. Part of the viral assembly initiation complex composed of NS2, E1, E2, NS3, NS4A, NS5A and the mature core protein. As to quaternary structure, homomultimer. Interacts with non-structural protein NS5A. Interacts with host PLA2G4C; this interaction likely initiates the recruitment of replication complexes to lipid droplets. Interacts with host STING; this interaction disrupts the interaction between STING and TBK1 thereby suppressing the interferon signaling. Part of the replication complex composed of NS2, NS3, NS4A, NS4B, NS5A and the RNA-directed RNA polymerase embedded in an ER-derived membranous web. Monomer. Homodimer; dimerization is required for RNA-binding. Interacts with the mature core protein. Interacts (via N-terminus) with non-structural protein 4A. Interacts with non-structural protein 4B. Interacts (via region D2) with RNA-directed RNA polymerase. Part of the viral assembly initiation complex composed of NS2, E1, E2, NS3, NS4A, NS5A and the mature core protein. Part of the replication complex composed of NS2, NS3, NS4A, NS4B, NS5A and the RNA-directed RNA polymerase embedded in an ER-derived membranous web. Interacts with host GRB2. Interacts with host BIN1. Interacts with host PIK3R1. Interacts with host SRCAP. Interacts with host FKBP8. Interacts (via C-terminus) with host VAPB (via MSP domain). Interacts with host EIF2AK2/PKR; this interaction leads to disruption of EIF2AK2 dimerization by NS5A and probably allows the virus to evade the innate immune response. Interacts (via N-terminus) with host PACSIN2 (via N-terminus); this interaction attenuates protein kinase C alpha-mediated phosphorylation of PACSIN2 by disrupting the interaction between PACSIN2 and PRKCA. Interacts (via N-terminus) with host SRC kinase (via SH2 domain). Interacts with most Src-family kinases. Interacts with host IFI27 and SKP2; promotes the ubiquitin-mediated proteasomal degradation of NS5A. Interacts with host GPS2. Interacts with host TNFRSF21; this interaction allows the modulation by the virus of JNK, p38 MAPK, STAT3, and Akt signaling pathways in a DR6-dependent manner. Interacts (via N-terminus) with host CIDEB (via N-terminus); this interaction seems to regulate the association of HCV particles with APOE. Interacts with host CHKA/Choline Kinase-alpha; CHKA bridges host PI4KA and NS5A and potentiates NS5A-stimulated PI4KA activity, which then facilitates the targeting of the ternary complex to the ER for viral replication. Interacts with host SPSB2 (via C-terminus); this interaction targets NS5A for ubiquitination and degradation. Interacts with host RAB18; this interaction may promote the association of NS5A and other replicase components with lipid droplets. Interacts (via region D2) with host PPIA/CYPA; the interaction stimulates RNA-binding ability of NS5A and is dependent on the peptidyl-prolyl cis-trans isomerase activity of PPIA/CYPA. Interacts with host TRIM14; this interaction induces the degradation of NS5A. In terms of assembly, homooligomer. Interacts with non-structural protein 5A. Interacts with host VAPB. Interacts with host PRK2/PKN2. Interacts with host HNRNPA1 and SEPT6; these interactions facilitate viral replication. Part of the replication complex composed of NS2, NS3, NS4A, NS4B, NS5A and the RNA-directed RNA polymerase. The cofactor is Zn(2+). Requires Mg(2+) as cofactor. Post-translationally, specific enzymatic cleavages in vivo yield mature proteins. The structural proteins, core, E1, E2 and p7 are produced by proteolytic processing by host signal peptidases. The core protein precursor is synthesized as a 23 kDa, which is retained in the ER membrane through the hydrophobic signal peptide. Cleavage by the signal peptidase releases the 21 kDa mature core protein. The cleavage of the core protein precursor occurs between aminoacids 176 and 188 but the exact cleavage site is not known. Some degraded forms of the core protein appear as well during the course of infection. The other proteins (p7, NS2, NS3, NS4A, NS4B, NS5A and NS5B) are cleaved by the viral proteases. Autoprocessing between NS2 and NS3 is mediated by the NS2 cysteine protease catalytic domain and regulated by the NS3 N-terminal domain. In terms of processing, phosphorylated by host PKC and PKA. Ubiquitinated; mediated by UBE3A and leading to core protein subsequent proteasomal degradation. Post-translationally, highly N-glycosylated. In terms of processing, palmitoylation is required for NS2/3 autoprocessing and E2 recruitment to membranes. Palmitoylated. This modification may play a role in its polymerization or in protein-protein interactions. Post-translationally, phosphorylated on serines in a basal form termed p56. p58 is a hyperphosphorylated form of p56. p56 and p58 coexist in the cell in roughly equivalent amounts. Hyperphosphorylation is dependent on the presence of NS4A. Host CSNK1A1/CKI-alpha or RPS6KB1 kinases may be responsible for NS5A phosphorylation. In terms of processing, tyrosine phosphorylation is essential for the interaction with host SRC. Ubiquitinated. Ubiquitination, most probably at Lys-2352, mediated by host IFI27 and SKP2 leads to proteasomal degradation, restricting viral infection. Ubiquitination by host TRIM22 leads to interruption of viral replication. Post-translationally, the N-terminus is phosphorylated by host PRK2/PKN2.

It is found in the host endoplasmic reticulum membrane. Its subcellular location is the host mitochondrion membrane. It localises to the virion. The protein localises to the host cytoplasm. The protein resides in the host nucleus. It is found in the host lipid droplet. Its subcellular location is the virion membrane. It localises to the host mitochondrion. The protein localises to the host cell membrane. The protein resides in the host perinuclear region. It carries out the reaction Hydrolysis of four peptide bonds in the viral precursor polyprotein, commonly with Asp or Glu in the P6 position, Cys or Thr in P1 and Ser or Ala in P1'.. The catalysed reaction is a ribonucleoside 5'-triphosphate + H2O = a ribonucleoside 5'-diphosphate + phosphate + H(+). The enzyme catalyses ATP + H2O = ADP + phosphate + H(+). It catalyses the reaction RNA(n) + a ribonucleoside 5'-triphosphate = RNA(n+1) + diphosphate. Inhibited by the antiviral drug hexamethylene amiloride. Inhibition by amantadine appears to be genotype-dependent. Also inhibited by long-alkyl-chain iminosugar derivatives. With respect to regulation, activity is up-regulated by PRK2/PKN2-mediated phosphorylation. In terms of biological role, packages viral RNA to form a viral nucleocapsid, and promotes virion budding. Participates in the viral particle production as a result of its interaction with the non-structural protein 5A. Binds RNA and may function as a RNA chaperone to induce the RNA structural rearrangements taking place during virus replication. Modulates viral translation initiation by interacting with viral IRES and 40S ribosomal subunit. Affects various cell signaling pathways, host immunity and lipid metabolism. Prevents the establishment of cellular antiviral state by blocking the interferon-alpha/beta (IFN-alpha/beta) and IFN-gamma signaling pathways and by blocking the formation of phosphorylated STAT1 and promoting ubiquitin-mediated proteasome-dependent degradation of STAT1. Activates STAT3 leading to cellular transformation. Regulates the activity of cellular genes, including c-myc and c-fos. May repress the promoter of p53, and sequester CREB3 and SP110 isoform 3/Sp110b in the cytoplasm. Represses cell cycle negative regulating factor CDKN1A, thereby interrupting an important check point of normal cell cycle regulation. Targets transcription factors involved in the regulation of inflammatory responses and in the immune response: suppresses TNF-induced NF-kappa-B activation, and activates AP-1. Binds to dendritic cells (DCs) via C1QR1, resulting in down-regulation of T-lymphocytes proliferation. Alters lipid metabolism by interacting with hepatocellular proteins involved in lipid accumulation and storage. Induces up-regulation of FAS promoter activity, and thereby contributes to the increased triglyceride accumulation in hepatocytes (steatosis). Functionally, forms a heterodimer with envelope glycoprotein E2, which mediates virus attachment to the host cell, virion internalization through clathrin-dependent endocytosis and fusion with host membrane. Fusion with the host cell is most likely mediated by both E1 and E2, through conformational rearrangements of the heterodimer required for fusion rather than a classical class II fusion mechanism. E1/E2 heterodimer binds host apolipoproteins such as APOB and ApoE thereby forming a lipo-viro-particle (LVP). APOE associated to the LVP allows the initial virus attachment to cell surface receptors such as the heparan sulfate proteoglycans (HSPGs), syndecan-1 (SDC1), syndecan-1 (SDC2), the low-density lipoprotein receptor (LDLR) and scavenger receptor class B type I (SCARB1). The cholesterol transfer activity of SCARB1 allows E2 exposure and binding of E2 to SCARB1 and the tetraspanin CD81. E1/E2 heterodimer binding on CD81 activates the epithelial growth factor receptor (EGFR) signaling pathway. Diffusion of the complex E1-E2-EGFR-SCARB1-CD81 to the cell lateral membrane allows further interaction with Claudin 1 (CLDN1) and occludin (OCLN) to finally trigger HCV entry. Its function is as follows. Forms a heterodimer with envelope glycoprotein E1, which mediates virus attachment to the host cell, virion internalization through clathrin-dependent endocytosis and fusion with host membrane. Fusion with the host cell is most likely mediated by both E1 and E2, through conformational rearrangements of the heterodimer required for fusion rather than a classical class II fusion mechanism. The interaction between envelope glycoprotein E2 and host apolipoprotein E/APOE allows the proper assembly, maturation and infectivity of the viral particles. This interaction is probably promoted via the up-regulation of cellular autophagy by the virus. E1/E2 heterodimer binds host apolipoproteins such as APOB and APOE thereby forming a lipo-viro-particle (LVP). APOE associated to the LVP allows the initial virus attachment to cell surface receptors such as the heparan sulfate proteoglycans (HSPGs), syndecan-1 (SDC1), syndecan-1 (SDC2), the low-density lipoprotein receptor (LDLR) and scavenger receptor class B type I (SCARB1). The cholesterol transfer activity of SCARB1 allows E2 exposure and binding of E2 to SCARB1 and the tetraspanin CD81. E1/E2 heterodimer binding on CD81 activates the epithelial growth factor receptor (EGFR) signaling pathway. Diffusion of the complex E1-E2-EGFR-SCARB1-CD81 to the cell lateral membrane allows further interaction with Claudin 1 (CLDN1) and occludin (OCLN) to finally trigger HCV entry. Inhibits host EIF2AK2/PKR activation, preventing the establishment of an antiviral state. Viral ligand for CD209/DC-SIGN and CLEC4M/DC-SIGNR, which are respectively found on dendritic cells (DCs), and on liver sinusoidal endothelial cells and macrophage-like cells of lymph node sinuses. These interactions allow the capture of circulating HCV particles by these cells and subsequent facilitated transmission to permissive cells such as hepatocytes and lymphocyte subpopulations. The interaction between E2 and host amino acid transporter complex formed by SLC3A2 and SLC7A5/LAT1 may facilitate viral entry into host cell. Ion channel protein that acts as a viroporin and plays an essential role in the assembly, envelopment and secretion of viral particles. Regulates the host cell secretory pathway, which induces the intracellular retention of viral glycoproteins and favors assembly of viral particles. Creates a pore in acidic organelles and releases Ca(2+) and H(+) in the cytoplasm of infected cells, leading to a productive viral infection. High levels of cytoplasmic Ca(2+) may trigger membrane trafficking and transport of viral ER-associated proteins to viroplasms, sites of viral genome replication. This ionic imbalance induces the assembly of the inflammasome complex, which triggers the maturation of pro-IL-1beta into IL-1beta through the action of caspase-1. Targets also host mitochondria and induces mitochondrial depolarization. In addition of its role as a viroporin, acts as a lipid raft adhesion factor. In terms of biological role, cysteine protease required for the proteolytic auto-cleavage between the non-structural proteins NS2 and NS3. The N-terminus of NS3 is required for the function of NS2 protease (active region NS2-3). Promotes the initiation of viral particle assembly by mediating the interaction between structural and non-structural proteins. Functionally, displays three enzymatic activities: serine protease with a chymotrypsin-like fold, NTPase and RNA helicase. NS3 serine protease, in association with NS4A, is responsible for the cleavages of NS3-NS4A, NS4A-NS4B, NS4B-NS5A and NS5A-NS5B. The NS3/NS4A complex prevents phosphorylation of host IRF3, thus preventing the establishment of dsRNA induced antiviral state. The NS3/NS4A complex induces host amino acid transporter component SLC3A2, thus contributing to HCV propagation. NS3 RNA helicase binds to RNA and unwinds both dsDNA and dsRNA in the 3' to 5' direction, and likely resolves RNA complicated stable secondary structures in the template strand. Binds a single ATP and catalyzes the unzipping of a single base pair of dsRNA. Inhibits host antiviral proteins TBK1 and IRF3 thereby preventing the establishment of an antiviral state. Cleaves host MAVS/CARDIF thereby preventing the establishment of an antiviral state. Cleaves host TICAM1/TRIF, thereby disrupting TLR3 signaling and preventing the establishment of an antiviral state. Its function is as follows. Peptide cofactor which forms a non-covalent complex with the N-terminal of NS3 serine protease. The NS3/NS4A complex prevents phosphorylation of host IRF3, thus preventing the establishment of dsRNA induced antiviral state. The NS3/NS4A complex induces host amino acid transporter component SLC3A2, thus contributing to HCV propagation. Induces a specific membrane alteration that serves as a scaffold for the virus replication complex. This membrane alteration gives rise to the so-called ER-derived membranous web that contains the replication complex. NS4B self-interaction contributes to its function in membranous web formation. Promotes host TRIF protein degradation in a CASP8-dependent manner thereby inhibiting host TLR3-mediated interferon signaling. Disrupts the interaction between STING and TBK1 contributing to the inhibition of interferon signaling. In terms of biological role, phosphorylated protein that is indispensable for viral replication and assembly. Both hypo- and hyperphosphorylated states are required for the viral life cycle. The hyperphosphorylated form of NS5A is an inhibitor of viral replication. Involved in RNA-binding and especially in binding to the viral genome. Zinc is essential for RNA-binding. Participates in the viral particle production as a result of its interaction with the mature viral core protein. Its interaction with host VAPB may target the viral replication complex to vesicles. Down-regulates viral IRES translation initiation. Mediates interferon resistance, presumably by interacting with and inhibiting host EIF2AK2/PKR. Prevents BIN1-induced apoptosis. Acts as a transcriptional activator of some host genes important for viral replication when localized in the nucleus. Via the interaction with host PACSIN2, modulates lipid droplet formation in order to promote virion assembly. Modulates TNFRSF21/DR6 signaling pathway for viral propagation. Functionally, RNA-dependent RNA polymerase that performs primer-template recognition and RNA synthesis during viral replication. Initiates RNA transcription/replication at a flavin adenine dinucleotide (FAD), resulting in a 5'- FAD cap on viral RNAs. In this way, recognition of viral 5' RNA by host pattern recognition receptors can be bypassed, thereby evading activation of antiviral pathways. The chain is Genome polyprotein from Hepatitis C virus genotype 6h (isolate VN004) (HCV).